The primary structure comprises 551 residues: Interleukin-2 receptor subunit beta (551 aa).

The N-terminal stretch at 1-26 is a signal peptide; it reads MAAPALSWRLPLLILLLPLATPWASA. The Extracellular portion of the chain corresponds to 27–240; it reads TVNGTSQFTC…TKPASLGKDT (214 aa). N-linked (GlcNAc...) asparagine glycosylation is found at Asn-29, Asn-43, and Asn-71. Cysteines 36 and 46 form a disulfide. A disulfide bond links Cys-74 and Cys-86. Residues 134–234 enclose the Fibronectin type-III domain; sequence APISLQVVHV…QPLAFRTKPA (101 aa). Residue Asn-149 is glycosylated (N-linked (GlcNAc...) asparagine). A WSXWS motif motif is present at residues 220–224; sequence WSPWS. The chain crosses the membrane as a helical span at residues 241-265; it reads IPWLGHLLVGLSGAFGFIILVYLLI. The Cytoplasmic portion of the chain corresponds to 266–551; that stretch reads NCRNTGPWLK…LQGQDPTHLV (286 aa). The Box 1 motif motif lies at 278–286; it reads LKCHTPDPS. Disordered stretches follow at residues 393–412 and 433–476; these read DEGVAGAPTGSSPQPLQPLS and SLLG…GPPT.

The protein belongs to the type I cytokine receptor family. Type 4 subfamily. Non-covalent dimer of an alpha and a beta subunit. IL2R exists in 3 different forms: a high affinity dimer, an intermediate affinity monomer (beta subunit), and a low affinity monomer (alpha subunit). The high and intermediate affinity forms also associate with a gamma subunit. Interacts with SHB upon interleukin stimulation.

Its subcellular location is the cell membrane. The protein localises to the cell surface. Receptor for interleukin-2. This beta subunit is involved in receptor mediated endocytosis and transduces the mitogenic signals of IL2. Probably in association with IL15RA, involved in the stimulation of neutrophil phagocytosis by IL15. The chain is Interleukin-2 receptor subunit beta (IL2RB) from Pan troglodytes (Chimpanzee).